The chain runs to 329 residues: ATP phosphoribosyltransferase regulatory subunit (329 aa).

This sequence belongs to the class-II aminoacyl-tRNA synthetase family. HisZ subfamily. In terms of assembly, heteromultimer composed of HisG and HisZ subunits.

Its subcellular location is the cytoplasm. The protein operates within amino-acid biosynthesis; L-histidine biosynthesis; L-histidine from 5-phospho-alpha-D-ribose 1-diphosphate: step 1/9. In terms of biological role, required for the first step of histidine biosynthesis. May allow the feedback regulation of ATP phosphoribosyltransferase activity by histidine. The polypeptide is ATP phosphoribosyltransferase regulatory subunit (Streptococcus gordonii (strain Challis / ATCC 35105 / BCRC 15272 / CH1 / DL1 / V288)).